The following is a 202-amino-acid chain: Hydrogenase expression/formation protein HupD (202 aa).

Residues glutamate 28, aspartate 74, and histidine 105 each contribute to the Ni(2+) site.

Belongs to the peptidase A31 family.

Functionally, not known. Could be involved in the processing of hydrogenase. This Rhizobium leguminosarum bv. viciae protein is Hydrogenase expression/formation protein HupD (hupD).